The primary structure comprises 509 residues: Cytochrome P450 monooxygenase FUP2 (509 aa).

The next 2 helical transmembrane spans lie at 16 to 36 (FGLALVISALALVSVIIYGCF) and 224 to 244 (MVEALSFFLTLPGIASVFGIA). Cys450 contributes to the heme binding site.

The protein belongs to the cytochrome P450 family. The cofactor is heme.

Its subcellular location is the membrane. Its pathway is secondary metabolite biosynthesis. Functionally, cytochrome P450 monooxygenase; part of the gene cluster that mediates the biosynthesis of the mycotoxin fusaproliferin (FUP) that belongs to the class of bicyclic sesterterpenoids. FUP2 introduces a hydroxyl group at the C-24 position resulting in the formation of preterpestacin IIa, which can be further oxidized. The oxidation of the hydroxyl group at C-24 to an aldehyde and further to a carboxylic group takes place via unspecific alcohol and aldehyde dehydrogenases and leads to the shunt products preterpestacin IIc and preterpestacin IIb, respectively. The FUP biosynthetic pathway starts with the enzyme encoded by FUP1 that combines a C-terminal prenyltransferase domain responsible for the synthesis of geranylgeranyl diphosphate with the N-terminal terpene cyclase domain, to yield preterpestacin I. Preterpestacin I is then decorated by oxygenation steps that are catalyzed by two cytochrome P450 monooxygenases. First, FUP2 introduces a hydroxyl group at the C-24 position resulting in the formation of preterpestacin IIa. The second P450 monooxygenase catalyzes the hydroxylation at C-16 and C-17 of preterpestacin IIa, producing preterpestacin III. Subsequently, the FAD-dependent oxidoreductase FUP4 catalyzes the oxidation of the hydroxy group at the C-16 position to a keto group, leading to the formation of (-)-terpestacin, which is the immediate precursor of FUP. The final step in the proposed biosynthetic pathway is the addition of an acetyl group at the C-24 position of terpestacin, which is catalyzed by the acetyltransferase FUP5. The protein is Cytochrome P450 monooxygenase FUP2 of Fusarium proliferatum (strain ET1) (Orchid endophyte fungus).